The following is an 86-amino-acid chain: uncharacterized protein (86 aa).

The N-terminal stretch at Met1–Ala31 is a signal peptide. Residues Pro46 to Met69 are disordered. The span at Lys55–Met69 shows a compositional bias: basic and acidic residues.

This is an uncharacterized protein from Bacillus subtilis (strain 168).